The following is a 315-amino-acid chain: tRNA wybutosine-synthesizing protein 5 (315 aa).

Residues 102 to 267 form the JmjC domain; the sequence is DEKYYLRSLG…YDTTDTYGNK (166 aa). Tyr-106 is a 2-oxoglutarate binding site. His-160 and Asp-162 together coordinate Fe cation. 2-oxoglutarate is bound by residues Asn-166 and Lys-175. Fe cation is bound at residue His-235.

The protein belongs to the TYW5 family. As to quaternary structure, homodimer. Fe(2+) is required as a cofactor.

It catalyses the reaction 7-[(3S)-3-amino-3-carboxypropyl]wyosine(37) in tRNA(Phe) + 2-oxoglutarate + O2 = 7-(2-hydroxy-3-amino-3-carboxypropyl)wyosine(37) in tRNA(Phe) + succinate + CO2. Its pathway is tRNA modification; wybutosine-tRNA(Phe) biosynthesis. Functionally, tRNA hydroxylase that acts as a component of the wybutosine biosynthesis pathway. Wybutosine is a hyper modified guanosine with a tricyclic base found at the 3'-position adjacent to the anticodon of eukaryotic phenylalanine tRNA. Catalyzes the hydroxylation of 7-(a-amino-a-carboxypropyl)wyosine (yW-72) into undermodified hydroxywybutosine (OHyW*). OHyW* being further transformed into hydroxywybutosine (OHyW) by LCMT2/TYW4. OHyW is a derivative of wybutosine found in higher eukaryotes. The sequence is that of tRNA wybutosine-synthesizing protein 5 (Tyw5) from Mus musculus (Mouse).